Here is a 299-residue protein sequence, read N- to C-terminus: ATP phosphoribosyltransferase (299 aa).

This sequence belongs to the ATP phosphoribosyltransferase family. Long subfamily. In terms of assembly, equilibrium between an active dimeric form, an inactive hexameric form and higher aggregates. Interconversion between the various forms is largely reversible and is influenced by the natural substrates and inhibitors of the enzyme. The cofactor is Mg(2+).

Its subcellular location is the cytoplasm. It catalyses the reaction 1-(5-phospho-beta-D-ribosyl)-ATP + diphosphate = 5-phospho-alpha-D-ribose 1-diphosphate + ATP. Its pathway is amino-acid biosynthesis; L-histidine biosynthesis; L-histidine from 5-phospho-alpha-D-ribose 1-diphosphate: step 1/9. Feedback inhibited by histidine. Functionally, catalyzes the condensation of ATP and 5-phosphoribose 1-diphosphate to form N'-(5'-phosphoribosyl)-ATP (PR-ATP). Has a crucial role in the pathway because the rate of histidine biosynthesis seems to be controlled primarily by regulation of HisG enzymatic activity. In Buchnera aphidicola subsp. Diuraphis noxia, this protein is ATP phosphoribosyltransferase.